The chain runs to 331 residues: Ketol-acid reductoisomerase (NADP(+)) (331 aa).

The region spanning Ala2–Thr182 is the KARI N-terminal Rossmann domain. Residues Tyr25–Gln28, Ser51, Ser53, and Asp83–Gln86 each bind NADP(+). His108 is a catalytic residue. Gly134 contributes to the NADP(+) binding site. The region spanning Asn183–Leu328 is the KARI C-terminal knotted domain. Mg(2+)-binding residues include Asp191, Glu195, Glu227, and Glu231. Ser252 is a substrate binding site.

The protein belongs to the ketol-acid reductoisomerase family. Mg(2+) is required as a cofactor.

The catalysed reaction is (2R)-2,3-dihydroxy-3-methylbutanoate + NADP(+) = (2S)-2-acetolactate + NADPH + H(+). The enzyme catalyses (2R,3R)-2,3-dihydroxy-3-methylpentanoate + NADP(+) = (S)-2-ethyl-2-hydroxy-3-oxobutanoate + NADPH + H(+). It participates in amino-acid biosynthesis; L-isoleucine biosynthesis; L-isoleucine from 2-oxobutanoate: step 2/4. The protein operates within amino-acid biosynthesis; L-valine biosynthesis; L-valine from pyruvate: step 2/4. Its function is as follows. Involved in the biosynthesis of branched-chain amino acids (BCAA). Catalyzes an alkyl-migration followed by a ketol-acid reduction of (S)-2-acetolactate (S2AL) to yield (R)-2,3-dihydroxy-isovalerate. In the isomerase reaction, S2AL is rearranged via a Mg-dependent methyl migration to produce 3-hydroxy-3-methyl-2-ketobutyrate (HMKB). In the reductase reaction, this 2-ketoacid undergoes a metal-dependent reduction by NADPH to yield (R)-2,3-dihydroxy-isovalerate. In Synechococcus sp. (strain CC9902), this protein is Ketol-acid reductoisomerase (NADP(+)).